The following is a 156-amino-acid chain: 6,7-dimethyl-8-ribityllumazine synthase (156 aa).

Residues Phe23, 57 to 59, and 81 to 83 contribute to the 5-amino-6-(D-ribitylamino)uracil site; these read AYE and AII. Residue 86-87 coordinates (2S)-2-hydroxy-3-oxobutyl phosphate; it reads GT. The Proton donor role is filled by His89. Residue Phe114 coordinates 5-amino-6-(D-ribitylamino)uracil. Residue Arg128 coordinates (2S)-2-hydroxy-3-oxobutyl phosphate.

It belongs to the DMRL synthase family.

It carries out the reaction (2S)-2-hydroxy-3-oxobutyl phosphate + 5-amino-6-(D-ribitylamino)uracil = 6,7-dimethyl-8-(1-D-ribityl)lumazine + phosphate + 2 H2O + H(+). It participates in cofactor biosynthesis; riboflavin biosynthesis; riboflavin from 2-hydroxy-3-oxobutyl phosphate and 5-amino-6-(D-ribitylamino)uracil: step 1/2. Its function is as follows. Catalyzes the formation of 6,7-dimethyl-8-ribityllumazine by condensation of 5-amino-6-(D-ribitylamino)uracil with 3,4-dihydroxy-2-butanone 4-phosphate. This is the penultimate step in the biosynthesis of riboflavin. This chain is 6,7-dimethyl-8-ribityllumazine synthase, found in Helicobacter pylori (strain G27).